The sequence spans 449 residues: Cytochrome P450 2E1 (449 aa).

254–259 serves as a coordination point for substrate; the sequence is FAGTET. Cysteine 393 lines the heme pocket.

Belongs to the cytochrome P450 family. As to quaternary structure, interacts with chaperones HSP70 and HSP90; this interaction is required for initial targeting to mitochondria. Heme is required as a cofactor.

It localises to the endoplasmic reticulum membrane. It is found in the microsome membrane. The protein localises to the mitochondrion inner membrane. The catalysed reaction is an organic molecule + reduced [NADPH--hemoprotein reductase] + O2 = an alcohol + oxidized [NADPH--hemoprotein reductase] + H2O + H(+). It catalyses the reaction (5Z,8Z,11Z)-eicosatrienoate + reduced [NADPH--hemoprotein reductase] + O2 = 19-hydroxy-(5Z,8Z,11Z)-eicosatrienoate + oxidized [NADPH--hemoprotein reductase] + H2O + H(+). It carries out the reaction (5Z,8Z,11Z,14Z,17Z)-eicosapentaenoate + reduced [NADPH--hemoprotein reductase] + O2 = 19-hydroxy-(5Z,8Z,11Z,14Z,17Z)-eicosapentaenoate + oxidized [NADPH--hemoprotein reductase] + H2O + H(+). The enzyme catalyses (4Z,7Z,10Z,13Z,16Z,19Z)-docosahexaenoate + reduced [NADPH--hemoprotein reductase] + O2 = 21-hydroxy-(4Z,7Z,10Z,13Z,16Z,19Z)-docosahexaenoate + oxidized [NADPH--hemoprotein reductase] + H2O + H(+). The catalysed reaction is dodecanoate + reduced [NADPH--hemoprotein reductase] + O2 = 11-hydroxydodecanoate + oxidized [NADPH--hemoprotein reductase] + H2O + H(+). It catalyses the reaction tetradecanoate + reduced [NADPH--hemoprotein reductase] + O2 = 13-hydroxytetradecanoate + oxidized [NADPH--hemoprotein reductase] + H2O + H(+). It carries out the reaction 4-nitrophenol + NADPH + O2 + H(+) = 4-nitrocatechol + NADP(+) + H2O. The protein operates within lipid metabolism; fatty acid metabolism. The omega-1 hydroxylase activity is stimulated by cytochrome b5. A cytochrome P450 monooxygenase involved in the metabolism of fatty acids. Mechanistically, uses molecular oxygen inserting one oxygen atom into a substrate, and reducing the second into a water molecule, with two electrons provided by NADPH via cytochrome P450 reductase (NADPH--hemoprotein reductase). Catalyzes the hydroxylation of carbon-hydrogen bonds. Hydroxylates fatty acids specifically at the omega-1 position displaying the highest catalytic activity for saturated fatty acids. May be involved in the oxidative metabolism of xenobiotics. In Macaca fascicularis (Crab-eating macaque), this protein is Cytochrome P450 2E1 (CYP2E1).